The sequence spans 601 residues: uncharacterized protein (601 aa).

Positions 24–35 are enriched in basic residues; that stretch reads RKSNVVLKKNKG. 2 disordered regions span residues 24–106 and 171–219; these read RKSN…LKLD and YGND…PREE. Residues 54–81 show a composition bias toward polar residues; sequence SQFSSRDNFRTTQTQASSSSEPSDNTNR. Over residues 92–106 the composition is skewed to basic and acidic residues; the sequence is TPKKEESNAEKLKLD. A phosphoserine mark is found at Ser-236 and Ser-238. Residues 260-283 form a disordered region; the sequence is RKRKVLSSSSEDDESSSPEDLLKP.

Its subcellular location is the nucleus. This is an uncharacterized protein from Schizosaccharomyces pombe (strain 972 / ATCC 24843) (Fission yeast).